The following is a 443-amino-acid chain: 26S proteasome regulatory subunit rpn501 (443 aa).

A Phosphoserine modification is found at serine 209. Positions 230 to 402 (DVCKYYRAVY…QVISFKKSQN (173 aa)) constitute a PCI domain.

Belongs to the proteasome subunit p55 family.

It localises to the nucleus. Acts as a regulatory subunit of the 26S proteasome which is involved in the ATP-dependent degradation of ubiquitinated proteins. Required for proper proteasome assembly. This is 26S proteasome regulatory subunit rpn501 (rpn501) from Schizosaccharomyces pombe (strain 972 / ATCC 24843) (Fission yeast).